A 598-amino-acid polypeptide reads, in one-letter code: MPCVQAQYGSSPQGASPASQSYSYHSSGEYSSDFLTPEFVKFSMDLTNTEITATTSLPSFSTFMDNYSTGYDVKPPCLYQMPLSGQQSSIKVEDIQMHNYQQHSHLPPQSEEMMPHSGSVYYKPSSPPTPSTPSFQVQHSPMWDDPGSLHNFHQNYVATTHMIEQRKTPVSRLSLFSFKQSPPGTPVSSCQMRFDGPLHVPMNPEPAGSHHVVDGQTFAVPNPIRKPASMGFPGLQIGHASQLLDTQVPSPPSRGSPSNEGLCAVCGDNAACQHYGVRTCEGCKGFFKRTVQKNAKYVCLANKNCPVDKRRRNRCQYCRFQKCLAVGMVKEVVRTDSLKGRRGRLPSKPKSPQDPSPPSPPVSLISALVRAHVDSNPAMTSLDYSRFQANPDYQMSGDDTQHIQQFYDLLTGSMEIIRGWAEKIPGFADLPKADQDLLFESAFLELFVLRLAYRSNPVEGKLIFCNGVVLHRLQCVRGFGEWIDSIVEFSSNLQNMNIDISAFSCIAALAMVTERHGLKEPKRVEELQNKIVNCLKDHVTFNNGGLNRPNYLSKLLGKLPELRTLCTQGLQRIFYLKLEDLVPPPAIIDKLFLDTLPF.

Positions 1 to 22 (MPCVQAQYGSSPQGASPASQSY) are disordered. Low complexity predominate over residues 8-22 (YGSSPQGASPASQSY). Positions 260 to 335 (EGLCAVCGDN…VGMVKEVVRT (76 aa)) form a DNA-binding region, nuclear receptor. 2 consecutive NR C4-type zinc fingers follow at residues 263 to 283 (CAVC…CEGC) and 299 to 323 (CLAN…FQKC). The Bipartite nuclear localization signal (NLS1) motif lies at 287–314 (FKRTVQKNAKYVCLANKNCPVDKRRRNR). The interval 337 to 361 (SLKGRRGRLPSKPKSPQDPSPPSPP) is disordered. The Nuclear localization signal (NLS1) motif lies at 338 to 350 (LKGRRGRLPSKPK). The span at 352–361 (PQDPSPPSPP) shows a compositional bias: pro residues. Residues 360–595 (PPVSLISALV…AIIDKLFLDT (236 aa)) form the NR LBD domain. The short motif at 443–452 (FLELFVLRLA) is the nuclear export sequence (NES1) element. A nuclear export sequence (NES2) motif is present at residues 568-577 (QGLQRIFYLK).

Belongs to the nuclear hormone receptor family. NR4 subfamily. Interacts with SFPQ, NCOR2, SIN3A and HADC1. The interaction with NCOR2 increases in the absence of PITX3. Interacts with PER2. Brain.

It localises to the cytoplasm. The protein localises to the nucleus. In terms of biological role, transcriptional regulator which is important for the differentiation and maintenance of meso-diencephalic dopaminergic (mdDA) neurons during development. It is crucial for expression of a set of genes such as SLC6A3, SLC18A2, TH and DRD2 which are essential for development of mdDA neurons. This Mus musculus (Mouse) protein is Nuclear receptor subfamily 4 group A member 2 (Nr4a2).